Consider the following 419-residue polypeptide: Arginine biosynthesis bifunctional protein ArgJ (419 aa).

Positions 154, 180, 191, 277, 414, and 419 each coordinate substrate. Threonine 191 acts as the Nucleophile in catalysis.

Belongs to the ArgJ family. Heterotetramer of two alpha and two beta chains.

The protein resides in the cytoplasm. The enzyme catalyses N(2)-acetyl-L-ornithine + L-glutamate = N-acetyl-L-glutamate + L-ornithine. The catalysed reaction is L-glutamate + acetyl-CoA = N-acetyl-L-glutamate + CoA + H(+). It functions in the pathway amino-acid biosynthesis; L-arginine biosynthesis; L-ornithine and N-acetyl-L-glutamate from L-glutamate and N(2)-acetyl-L-ornithine (cyclic): step 1/1. It participates in amino-acid biosynthesis; L-arginine biosynthesis; N(2)-acetyl-L-ornithine from L-glutamate: step 1/4. Functionally, catalyzes two activities which are involved in the cyclic version of arginine biosynthesis: the synthesis of N-acetylglutamate from glutamate and acetyl-CoA as the acetyl donor, and of ornithine by transacetylation between N(2)-acetylornithine and glutamate. The chain is Arginine biosynthesis bifunctional protein ArgJ from Thermosynechococcus vestitus (strain NIES-2133 / IAM M-273 / BP-1).